Consider the following 369-residue polypeptide: Transmembrane protein 198 (369 aa).

7 helical membrane passes run 37–57 (VVPS…CFFG), 60–80 (CFKA…IFLL), 93–113 (VEAS…VTML), 117–137 (VGLF…TLIG), 148–168 (SVWV…VLTL), 181–201 (VFGA…FALV), and 216–236 (VCWT…LGVL). The disordered stretch occupies residues 266–308 (RQKEERRESSRKKKRKQPQSAQHTHAAKALHPEPAYRRKPNPI).

The protein belongs to the TMEM198 family.

It localises to the membrane. The sequence is that of Transmembrane protein 198 (tmem198ab) from Danio rerio (Zebrafish).